A 143-amino-acid chain; its full sequence is Large ribosomal subunit protein uL11 (143 aa).

This sequence belongs to the universal ribosomal protein uL11 family. Part of the ribosomal stalk of the 50S ribosomal subunit. Interacts with L10 and the large rRNA to form the base of the stalk. L10 forms an elongated spine to which L12 dimers bind in a sequential fashion forming a multimeric L10(L12)X complex. Post-translationally, one or more lysine residues are methylated.

Forms part of the ribosomal stalk which helps the ribosome interact with GTP-bound translation factors. This is Large ribosomal subunit protein uL11 from Paraburkholderia phymatum (strain DSM 17167 / CIP 108236 / LMG 21445 / STM815) (Burkholderia phymatum).